We begin with the raw amino-acid sequence, 988 residues long: Transposase for transposon Tn21 (988 aa).

The interval 672-696 is disordered; the sequence is GDGTTSSSDEQNFRTASKAKSTGHI. Positions 674–695 are enriched in polar residues; that stretch reads GTTSSSDEQNFRTASKAKSTGH.

The protein belongs to the transposase 7 family.

Its function is as follows. Required for transposition of transposon Tn21. The polypeptide is Transposase for transposon Tn21 (tnpA) (Escherichia coli).